We begin with the raw amino-acid sequence, 213 residues long: Methylthioribulose-1-phosphate dehydratase (213 aa).

Zn(2+)-binding residues include histidine 104 and histidine 106.

Belongs to the aldolase class II family. MtnB subfamily. Zn(2+) serves as cofactor.

It catalyses the reaction 5-(methylsulfanyl)-D-ribulose 1-phosphate = 5-methylsulfanyl-2,3-dioxopentyl phosphate + H2O. Its pathway is amino-acid biosynthesis; L-methionine biosynthesis via salvage pathway; L-methionine from S-methyl-5-thio-alpha-D-ribose 1-phosphate: step 2/6. Its function is as follows. Catalyzes the dehydration of methylthioribulose-1-phosphate (MTRu-1-P) into 2,3-diketo-5-methylthiopentyl-1-phosphate (DK-MTP-1-P). The protein is Methylthioribulose-1-phosphate dehydratase of Stenotrophomonas maltophilia (strain K279a).